Reading from the N-terminus, the 482-residue chain is Ribosomal protein uS12 methylthiotransferase RimO (482 aa).

The MTTase N-terminal domain occupies 2 to 115; that stretch reads MKVHIITLGC…IAEVVETFQP (114 aa). [4Fe-4S] cluster-binding residues include cysteine 11, cysteine 47, cysteine 79, cysteine 177, cysteine 181, and cysteine 184. Positions 163–394 constitute a Radical SAM core domain; that stretch reads RAVGPSAYLK…MRLQQRISRE (232 aa). The TRAM domain occupies 397 to 466; the sequence is RRWLGRVVRV…DYDLWGDVVG (70 aa).

Belongs to the methylthiotransferase family. RimO subfamily. [4Fe-4S] cluster is required as a cofactor.

It localises to the cytoplasm. The enzyme catalyses L-aspartate(89)-[ribosomal protein uS12]-hydrogen + (sulfur carrier)-SH + AH2 + 2 S-adenosyl-L-methionine = 3-methylsulfanyl-L-aspartate(89)-[ribosomal protein uS12]-hydrogen + (sulfur carrier)-H + 5'-deoxyadenosine + L-methionine + A + S-adenosyl-L-homocysteine + 2 H(+). In terms of biological role, catalyzes the methylthiolation of an aspartic acid residue of ribosomal protein uS12. This Roseiflexus castenholzii (strain DSM 13941 / HLO8) protein is Ribosomal protein uS12 methylthiotransferase RimO.